A 468-amino-acid polypeptide reads, in one-letter code: Cyclin-T1.1 (468 aa).

Residues lysine 336–glycine 354 show a composition bias toward basic and acidic residues. The tract at residues lysine 336 to glutamate 468 is disordered. Over residues alanine 387–isoleucine 402 the composition is skewed to pro residues. Positions serine 458 to glutamate 468 are enriched in acidic residues.

Belongs to the cyclin family. Cyclin C subfamily.

Regulatory subunit of the cyclin-dependent kinase pair (CDK9/cyclin T) complex, also called positive transcription elongation factor B (P-TEFb), which is proposed to facilitate the transition from abortive to production elongation by phosphorylating the CTD (carboxy-terminal domain) of the large subunit of RNA polymerase II (RNAP II). This chain is Cyclin-T1.1, found in Caenorhabditis elegans.